Here is a 350-residue protein sequence, read N- to C-terminus: Guanine nucleotide-binding protein G(t) subunit alpha-1 (350 aa).

Residues Met-1–Glu-21 are disordered. Gly-2 carries N-myristoyl glycine lipidation. The segment covering Ala-7–Glu-21 has biased composition (basic and acidic residues). The G-alpha domain occupies Arg-28–Phe-350. Residues Lys-31–Thr-44 are G1 motif. Gly-36–Ser-43 contacts GTP. Residue Ser-43 participates in Mg(2+) binding. Position 142 is a phosphotyrosine; by SRC (Tyr-142). GTP contacts are provided by residues Asp-146, Leu-171 to Thr-177, Gly-199, Asn-265 to Asp-268, and Ala-322. The segment at Asp-169 to Thr-177 is G2 motif. Arg-174 is subject to ADP-ribosylarginine; by cholera toxin. Residue Thr-177 coordinates Mg(2+). Positions Phe-192–Arg-201 are G3 motif. A G4 motif region spans residues Val-261 to Asp-268. Positions Thr-320–Thr-325 are G5 motif. The interaction with RHO stretch occupies residues Ile-340–Phe-350. Cys-347 is subject to ADP-ribosylcysteine; by pertussis toxin.

Belongs to the G-alpha family. G(i/o/t/z) subfamily. As to quaternary structure, heterotrimeric G proteins are composed of 3 subunits alpha, beta and gamma. The alpha chain contains the guanine nucleotide binding site. Interacts with RHO. Interacts with RGS9 and PDE6G. Interacts (when myristoylated) with UNC119; interaction is required for localization in sensory neurons. Rod photoreceptor cells. Predominantly expressed in the retina followed by the ciliary body, iris and retinal pigment epithelium.

The protein localises to the cell projection. It is found in the cilium. The protein resides in the photoreceptor outer segment. Its subcellular location is the membrane. It localises to the photoreceptor inner segment. In terms of biological role, functions as a signal transducer for the rod photoreceptor RHO. Required for normal RHO-mediated light perception by the retina. Guanine nucleotide-binding proteins (G proteins) function as transducers downstream of G protein-coupled receptors (GPCRs), such as the photoreceptor RHO. The alpha chain contains the guanine nucleotide binding site and alternates between an active, GTP-bound state and an inactive, GDP-bound state. Activated RHO promotes GDP release and GTP binding. Signaling is mediated via downstream effector proteins, such as cGMP-phosphodiesterase. This Homo sapiens (Human) protein is Guanine nucleotide-binding protein G(t) subunit alpha-1 (GNAT1).